The chain runs to 435 residues: Enolase (435 aa).

Position 167 (Gln-167) interacts with (2R)-2-phosphoglycerate. The Proton donor role is filled by Glu-209. 3 residues coordinate Mg(2+): Asp-246, Glu-292, and Asp-319. Positions 344, 373, 374, and 395 each coordinate (2R)-2-phosphoglycerate. Lys-344 (proton acceptor) is an active-site residue.

Belongs to the enolase family. Mg(2+) is required as a cofactor.

The protein resides in the cytoplasm. It is found in the secreted. Its subcellular location is the cell surface. It carries out the reaction (2R)-2-phosphoglycerate = phosphoenolpyruvate + H2O. Its pathway is carbohydrate degradation; glycolysis; pyruvate from D-glyceraldehyde 3-phosphate: step 4/5. Its function is as follows. Catalyzes the reversible conversion of 2-phosphoglycerate (2-PG) into phosphoenolpyruvate (PEP). It is essential for the degradation of carbohydrates via glycolysis. The sequence is that of Enolase from Lachnospira eligens (strain ATCC 27750 / DSM 3376 / VPI C15-48 / C15-B4) (Eubacterium eligens).